Reading from the N-terminus, the 122-residue chain is Large ribosomal subunit protein uL14 (122 aa).

The protein belongs to the universal ribosomal protein uL14 family. As to quaternary structure, part of the 50S ribosomal subunit. Forms a cluster with proteins L3 and L19. In the 70S ribosome, L14 and L19 interact and together make contacts with the 16S rRNA in bridges B5 and B8.

Functionally, binds to 23S rRNA. Forms part of two intersubunit bridges in the 70S ribosome. The polypeptide is Large ribosomal subunit protein uL14 (Desulfatibacillum aliphaticivorans).